The primary structure comprises 621 residues: Cyclic nucleotide-gated ion channel 11 (621 aa).

Residues 1–43 (MNLQRRKFVRLDSTGVDGKLKSVRGRLKKVYGKMKTLENWRKT) lie on the Cytoplasmic side of the membrane. Residues 44-64 (VLLACVVALAIDPLFLFIPLI) traverse the membrane as a helical segment. Residues 65–76 (DSQRFCFTFDKT) are Extracellular-facing. A helical transmembrane segment spans residues 77–97 (LVAVVCVIRTFIDTFYVIHII). Topologically, residues 98–128 (YYLITETIAPRSQASLRGEIVVHSKATLKTR) are cytoplasmic. Residues 129–149 (LLFHFIVDIISVLPIPQVVVL) traverse the membrane as a helical segment. Residues 150–162 (TLIPLSASLVSER) lie on the Extracellular side of the membrane. A helical membrane pass occupies residues 163–183 (ILKWIILSQYVPRIIRMYPLY). The Cytoplasmic portion of the chain corresponds to 184-198 (KEVTRAFGTVAESKR). The chain crosses the membrane as a helical span at residues 199 to 219 (VGAALNFFLYMLHSYVCGAFW). The Extracellular segment spans residues 220–329 (YLSSIERKST…QNLETSNSAG (110 aa)). Residues 330 to 350 (EIFFAIIICVSGLLLFAVLIG) traverse the membrane as a helical segment. Over 351 to 621 (NVQKYLQSST…KLNLGAAIYA (271 aa)) the chain is Cytoplasmic. A nucleoside 3',5'-cyclic phosphate-binding positions include 435–556 (LLQA…HSKQ) and Asp506. A calmodulin-binding region spans residues 549–564 (YRRLHSKQLQHMFRFY). Residues 569–598 (QTWAACFIQAAWKRHCRRKLSKALREEEGK) form the IQ domain.

Belongs to the cyclic nucleotide-gated cation channel (TC 1.A.1.5) family. In terms of assembly, homotetramer or heterotetramer.

It localises to the cell membrane. In terms of biological role, putative cyclic nucleotide-gated ion channel. The sequence is that of Cyclic nucleotide-gated ion channel 11 (CNGC11) from Arabidopsis thaliana (Mouse-ear cress).